A 1094-amino-acid polypeptide reads, in one-letter code: MATEAAPPRIAVRLPSTSVRDAGANYRIARYVAVVAGLLGAVLAIATPLLPVNQTTAQLNWPQNGTFASVEAPLIGYVATDLNITVPCQAAAGLAGSQNTGKTVLLSTVPKQAPKAVDRGLLLQRANDDLVLVVRNVPLVTAPLSQVLGPTCQRLTFTAHADRVAAEFVGLVQGPNAEHPGAPLRGERSGYDFRPQIVGVFTDLAGPAPPGLSFSASVDTRYSSSPTPLKMAAMILGVALTGAALVALHILDTADGMRHRRFLPARWWSTGGLDTLVIAVLVWWHFVGANTSDDGYILTMARVSEHAGYMANYYRWFGTPEAPFGWYYDLLALWAHVSTASIWMRLPTLAMALTCWWVISREVIPRLGHAVKTSRAAAWTAAGMFLAVWLPLDNGLRPEPIIALGILLTWCSVERAVATSRLLPVAIACIIGALTLFSGPTGIASIGALLVAIGPLRTILHRRSRRFGVLPLVAPILAAATVTAIPIFRDQTFAGEIQANLLKRAVGPSLKWFDEHIRYERLFMASPDGSIARRFAVLALVLALAVSVAMSLRKGRIPGTAAGPSRRIIGITIISFLAMMFTPTKWTHHFGVFAGLAGSLGALAAVAVTGAAMRSRRNRTVFAAVVVFVLALSFASVNGWWYVSNFGVPWSNSFPKWRWSLTTALLELTVLVLLLAAWFHFVANGDGRRTARPTRFRARLAGIVQSPLAIATWLLVLFEVVSLTQAMISQYPAWSVGRSNLQALAGKTCGLAEDVLVELDPNAGMLAPVTAPLADALGAGLSEAFTPNGIPADVTADPVMERPGDRSFLNDDGLITGSEPGTEGGTTAAPGINGSRARLPYNLDPARTPVLGSWRAGVQVPAMLRSGWYRLPTNEQRDRAPLLVVTAAGRFDSREVRLQWATDEQAAAGHHGGSMEFADVGAAPAWRNLRAPLSAIPSTATQVRLVADDQDLAPQHWIALTPPRIPRVRTLQNVVGAADPLFLDWLVGLAFPCQRPFGHQYGVDETPKWRILPDRFGAEANSPVMDHNGGGPLGITELLMRATTVASYLKDDWFRDWGALQRLTPYYPDAQPADLNLGTVTRSGLWSPAPLRRG.

A run of 13 helical transmembrane segments spans residues 28 to 50 (IARY…TPLL), 232 to 251 (AAMI…LHIL), 264 to 286 (PARW…WWHF), 341 to 360 (SIWM…WVIS), 373 to 392 (TSRA…WLPL), 431 to 453 (IGAL…LVAI), 466 to 488 (RFGV…IPIF), 530 to 552 (SIAR…AMSL), 565 to 582 (SRRI…MMFT), 586 to 608 (WTHH…AVAV), 620 to 642 (TVFA…GWWY), 657 to 679 (WRWS…AAWF), and 700 to 722 (LAGI…EVVS). Residues 817-831 (GSEPGTEGGTTAAPG) are compositionally biased toward low complexity. Residues 817–836 (GSEPGTEGGTTAAPGINGSR) form a disordered region.

The protein belongs to the emb family.

It is found in the cell membrane. Arabinosyl transferase responsible for the polymerization of arabinose into the arabinan of arabinogalactan. In Mycobacterium tuberculosis (strain CDC 1551 / Oshkosh), this protein is Probable arabinosyltransferase C (embC).